A 204-amino-acid chain; its full sequence is E2 ubiquitin-conjugating enzyme PEX4 (204 aa).

The 195-residue stretch at 2–196 (SAEKRLLQEY…IEYYVGRYSI (195 aa)) folds into the UBC core domain. Cys-133 serves as the catalytic Glycyl thioester intermediate.

This sequence belongs to the ubiquitin-conjugating enzyme family.

The protein resides in the peroxisome membrane. It carries out the reaction S-ubiquitinyl-[E1 ubiquitin-activating enzyme]-L-cysteine + [E2 ubiquitin-conjugating enzyme]-L-cysteine = [E1 ubiquitin-activating enzyme]-L-cysteine + S-ubiquitinyl-[E2 ubiquitin-conjugating enzyme]-L-cysteine.. It participates in protein modification; protein ubiquitination. Functionally, E2 ubiquitin-conjugating enzyme involved in peroxisome biosynthesis. Acts late in peroxisomal matrix protein import, after matrix protein translocation. Required for both monoubiquitination and polyubiquitination of coreceptor PEX20. polyubiquitination of PEX20 at conserved lysine 'Lys-19' near the N-terminus leads to its and proteasomal degradation, whereas a monoubiquitination at the conserved cysteine 'Cys-8' is essential for its recycling. The sequence is that of E2 ubiquitin-conjugating enzyme PEX4 from Komagataella phaffii (strain GS115 / ATCC 20864) (Yeast).